We begin with the raw amino-acid sequence, 416 residues long: Phosphatidylinositol 5-phosphate 4-kinase type-2 beta (416 aa).

The residue at position 2 (serine 2) is an N-acetylserine. Residue threonine 8 is modified to Phosphothreonine. Serine 19 is subject to Phosphoserine. The 378-residue stretch at 38–415 (ASEPILSVLM…RFNEFMSNIL (378 aa)) folds into the PIPK domain. The required for interaction with PIP5K1A stretch occupies residues 64 to 70 (VMLMPDD). Residues lysine 94 and lysine 150 each carry the N6-acetyllysine modification. ATP contacts are provided by residues 202–204 (RNV) and lysine 214. Residues 203-204 (NV) and lysine 214 contribute to the GTP site. Threonine 322 bears the Phosphothreonine mark. The residue at position 326 (serine 326) is a Phosphoserine. Aspartate 369 is a GTP binding site.

In terms of assembly, homodimer. Binds TNFRSF1A. Interacts with PIP4K2A; the interaction suppresses ubiquitination by the SPOP/CUL3 complex. Probably interacts with PIP5K1A; the interaction inhibits PIP5K1A kinase activity. Ubiquitinated by the SPOP/CUL3 complex. Ubiquitination is stimulated by PtdIns5P levels. In terms of processing, phosphorylated on serine residues.

It is found in the endoplasmic reticulum membrane. Its subcellular location is the cell membrane. The protein localises to the nucleus. The protein resides in the cytoplasm. The enzyme catalyses a 1,2-diacyl-sn-glycero-3-phospho-(1D-myo-inositol-5-phosphate) + ATP = a 1,2-diacyl-sn-glycero-3-phospho-(1D-myo-inositol-4,5-bisphosphate) + ADP + H(+). The catalysed reaction is 1,2-dihexadecanoyl-sn-glycero-3-phospho-(1D-myo-inositol-5-phosphate) + ATP = 1,2-dihexadecanoyl-sn-glycero-3-phospho-(1D-myo-inositol-4,5-bisphosphate) + ADP + H(+). It carries out the reaction 1,2-dihexadecanoyl-sn-glycero-3-phospho-(1D-myo-inositol-5-phosphate) + GTP = 1,2-dihexadecanoyl-sn-glycero-3-phospho-(1D-myo-inositol-4,5-bisphosphate) + GDP + H(+). Its function is as follows. Participates in the biosynthesis of phosphatidylinositol 4,5-bisphosphate. Preferentially utilizes GTP, rather than ATP, for PI(5)P phosphorylation and its activity reflects changes in direct proportion to the physiological GTP concentration. Its GTP-sensing activity is critical for metabolic adaptation. In collaboration with PIP4K2A, has a role in mediating autophagy in times of nutrient stress. Required for autophagosome-lysosome fusion and the regulation of cellular lipid metabolism. PIP4Ks negatively regulate insulin signaling through a catalytic-independent mechanism. They interact with PIP5Ks and suppress PIP5K-mediated PtdIns(4,5)P2 synthesis and insulin-dependent conversion to PtdIns(3,4,5)P3. In Mus musculus (Mouse), this protein is Phosphatidylinositol 5-phosphate 4-kinase type-2 beta.